The sequence spans 462 residues: UDP-N-acetylmuramoylalanine--D-glutamate ligase (462 aa).

ATP is bound at residue 112–118; the sequence is GTNGKTT.

It belongs to the MurCDEF family.

It localises to the cytoplasm. It catalyses the reaction UDP-N-acetyl-alpha-D-muramoyl-L-alanine + D-glutamate + ATP = UDP-N-acetyl-alpha-D-muramoyl-L-alanyl-D-glutamate + ADP + phosphate + H(+). It participates in cell wall biogenesis; peptidoglycan biosynthesis. Its function is as follows. Cell wall formation. Catalyzes the addition of glutamate to the nucleotide precursor UDP-N-acetylmuramoyl-L-alanine (UMA). The sequence is that of UDP-N-acetylmuramoylalanine--D-glutamate ligase from Nostoc sp. (strain PCC 7120 / SAG 25.82 / UTEX 2576).